Consider the following 422-residue polypeptide: 4-hydroxy-3-methylbut-2-en-1-yl diphosphate synthase (flavodoxin) (422 aa).

Positions 316, 319, 362, and 369 each coordinate [4Fe-4S] cluster.

It belongs to the IspG family. [4Fe-4S] cluster is required as a cofactor.

The enzyme catalyses (2E)-4-hydroxy-3-methylbut-2-enyl diphosphate + oxidized [flavodoxin] + H2O + 2 H(+) = 2-C-methyl-D-erythritol 2,4-cyclic diphosphate + reduced [flavodoxin]. Its pathway is isoprenoid biosynthesis; isopentenyl diphosphate biosynthesis via DXP pathway; isopentenyl diphosphate from 1-deoxy-D-xylulose 5-phosphate: step 5/6. Its function is as follows. Converts 2C-methyl-D-erythritol 2,4-cyclodiphosphate (ME-2,4cPP) into 1-hydroxy-2-methyl-2-(E)-butenyl 4-diphosphate. The polypeptide is 4-hydroxy-3-methylbut-2-en-1-yl diphosphate synthase (flavodoxin) (Ehrlichia ruminantium (strain Gardel)).